A 624-amino-acid polypeptide reads, in one-letter code: MDTQPIRLPSVAGATRSAGYPTRPPLRRFLTDCHEEFRGDSSGELADYIPELKRANPDHFGIALVTIDGHVYEVGDSAVPFTIQSVSKAFVFALALETVGEERVSATIGVEPSGEAFNSIRLTNDNRPFNPMVNAGAIACSGLIYEVDGKGAFERVRSKLSEFAGRELGVDEAVHASETATGNRNRAIAWLLRNYAVLPDDVDAVLDVYFRQCAILVTARDLAVMAATLANRGINPVTGAQVITPHIVARTLSVMTSSGMYDYAGEWTYRVGIPAKSGVGGGIVAALPSQLGLGTFSPLLDNHFNSVRGLKVCEALSARFDLHMLNRNADVRTSVMADYDVYGISSRRSRQPHEQQILDERHSDIRIVELVGALNFGTIDYVTRRLTSEPPNAPLLIIDFRRVPDITAAGAELLGETLTALGNANVTTILSGLEEASAVWAAIAARTGDPRRLRRFALLDDAIEWAEDQVIYRFGGFTDVKESVHLGEQALLAELDTDEIAAIVKLSTTRHYTAGQRVIAAGAPANSLFFLQSGMVSVKLRSGVRLASLGPGMEFGEMAILERTRSADVFADTPVACLELPLDSFADYRRLHPETALKIMRNLAAILARRLVAANAKVDLLSAY.

Residues 1–20 form a disordered region; that stretch reads MDTQPIRLPSVAGATRSAGY. A glutaminase region spans residues 43–325; that stretch reads GELADYIPEL…LSARFDLHML (283 aa). Substrate is bound by residues Ser85, Asn134, Glu178, Asn185, Tyr209, Tyr261, and Val279. The region spanning 355–466 is the STAS domain; it reads QQILDERHSD…ALLDDAIEWA (112 aa). 491 to 608 provides a ligand contact to a nucleoside 3',5'-cyclic phosphate; it reads LLAELDTDEI…IMRNLAAILA (118 aa).

This sequence belongs to the glutaminase family. As to quaternary structure, homotetramer.

It catalyses the reaction L-glutamine + H2O = L-glutamate + NH4(+). The polypeptide is Glutaminase 2 (glsA2) (Bradyrhizobium diazoefficiens (strain JCM 10833 / BCRC 13528 / IAM 13628 / NBRC 14792 / USDA 110)).